The following is a 223-amino-acid chain: MHCAEAGKALIKFNHCEKYIYSFSVPQCCPLCQQDLGSRKLEDAPVSIANPFTNGHQEKCSFLLRPTQGTFLREYDGRSDLHVGITNTNGVVYNYSAHGVQRDGEGWEESISIPLLQPNMYGMMEQWDKYLEDFSTSGAWLPHRYEDNHHNCYSYALTFINCVLMAEGRQQLDKGEFTEKYVVPRTRLASKFITLYRAIREHGFYVTDCPQQQAQPPEGGGLC.

The protein is MKRN2 opposite strand protein (MKRN2OS) of Homo sapiens (Human).